Here is a 555-residue protein sequence, read N- to C-terminus: Urocanate hydratase (555 aa).

Residues 52–53, glutamine 130, 176–178, glutamate 196, arginine 201, 242–243, 263–267, 273–274, and tyrosine 322 contribute to the NAD(+) site; these read GG, GMG, NA, QTSAH, and YL. Cysteine 410 is an active-site residue. Glycine 492 provides a ligand contact to NAD(+).

The protein belongs to the urocanase family. The cofactor is NAD(+).

Its subcellular location is the cytoplasm. It carries out the reaction 4-imidazolone-5-propanoate = trans-urocanate + H2O. The protein operates within amino-acid degradation; L-histidine degradation into L-glutamate; N-formimidoyl-L-glutamate from L-histidine: step 2/3. Its function is as follows. Catalyzes the conversion of urocanate to 4-imidazolone-5-propionate. This is Urocanate hydratase from Shewanella baltica (strain OS185).